Consider the following 1076-residue polypeptide: Ribosome quality control complex subunit NEMF (1076 aa).

Thr-7 is modified (phosphothreonine). Positions 296-359 form a coiled coil; it reads VDEFYSKIEG…LIEMNLQIVD (64 aa). Position 417 is a phosphoserine (Ser-417). The disordered stretch occupies residues 420 to 453; the sequence is EDDDVDGDVNVEKNETEPPKGKKKKQKNKQLQKP. The segment covering 429-439 has biased composition (basic and acidic residues); the sequence is NVEKNETEPPK. Positions 440-449 are enriched in basic residues; that stretch reads GKKKKQKNKQ. Residues 483-514 are a coiled coil; it reads AAKKTQKTVEAAEKAFKSAEKKTKQTLKEVQT. 2 stretches are compositionally biased toward acidic residues: residues 691-710 and 742-754; these read ISEEMEQLDGGDTSSDEDKE and LIQEESSEDEGEY. 2 disordered regions span residues 691 to 715 and 742 to 972; these read ISEEMEQLDGGDTSSDEDKEEHETP and LIQE…DLDQ. Phosphoserine occurs at positions 747, 748, and 763. Over residues 755–768 the composition is skewed to basic and acidic residues; the sequence is EEVRKDQDSVGEMK. Residues 777 to 795 show a composition bias toward polar residues; it reads YPDTTIDLSHLQPQRSIQK. Ser-831 carries the phosphoserine modification. Basic and acidic residues predominate over residues 839–854; that stretch reads LEGKDKEKESTVHIET. A coiled-coil region spans residues 869-894; that stretch reads KRGQKSKMKKMKEKYKDQDEEDRELI. Over residues 870–881 the composition is skewed to basic residues; the sequence is RGQKSKMKKMKE. The span at 937–965 shows a compositional bias: basic and acidic residues; it reads DNIKKETPFLEVITHELQDFAVDDPHDDK.

Belongs to the NEMF family. Component of the ribosome quality control complex (RQC), composed of the E3 ubiquitin ligase LTN1, TCF25 and NEMF associated with the 60S ribosomal subunit. The complex probably also contains VCP/p97 and its ubiquitin-binding cofactors. Interacts (via its N-terminus) with XPO1. In terms of tissue distribution, expressed in brain, heart, liver, lung, spleen, and skeletal muscle. Also expressed at lower levels in stomach and testis.

It localises to the cytoplasm. Its subcellular location is the cytosol. The protein localises to the nucleus. Functionally, key component of the ribosome quality control complex (RQC), a ribosome-associated complex that mediates the extraction of incompletely synthesized nascent chains from stalled ribosomes as well as their ubiquitin-mediated proteasomal degradation. Thereby, frees 60S subunit ribosomes from the stalled translation complex and prevents the accumulation of nascent polypeptide chains that are potentially toxic for the cell. Within the RQC complex, NEMF specifically binds stalled 60S ribosomal subunits by recognizing an exposed, nascent chain-conjugated tRNA moiety and promotes the recruitment of LTN1 to stalled 60S subunits. Following binding to stalled 60S ribosomal subunits, NEMF mediates CAT tailing by recruiting alanine-charged tRNA to the A-site and directing the elongation of stalled nascent chains independently of mRNA or 40S subunits, leading to non-templated C-terminal alanine extensions (CAT tails). Mainly recruits alanine-charged tRNAs, but can also other amino acid-charged tRNAs. CAT tailing is required to promote ubiquitination of stalled nascent chains by different E3 ubiquitin-protein ligases. In the canonical RQC pathway (RQC-L), CAT tailing facilitates LTN1-dependent ubiquitination by exposing lysine residues that would otherwise remain buried in the ribosomal exit tunnel. In the alternative RQC pathway (RQC-C) CAT tailing creates an C-degron mainly composed of alanine that is recognized by the CRL2(KLHDC10) and RCHY1/PIRH2 E3 ligases, leading to ubiquitination and degradation of stalled nascent chains. NEMF may also indirectly play a role in nuclear export. The sequence is that of Ribosome quality control complex subunit NEMF from Homo sapiens (Human).